Reading from the N-terminus, the 908-residue chain is Adhesion G-protein coupled receptor F1 (908 aa).

Residues 1–20 form the signal peptide; the sequence is MRIGLLWLVPLFTLTEGTDG. The Extracellular segment spans residues 21 to 588; that stretch reads FLQQKNDGRR…VVPVVKWITY (568 aa). N-linked (GlcNAc...) asparagine glycosylation is found at N133, N167, N328, N353, N367, N388, N422, N453, N510, N519, N526, and N551. An SEA domain is found at 147 to 255; that stretch reads ERAKVWGTFE…GSFRVFGKAP (109 aa). The 144-residue stretch at 434–577 folds into the GAIN-B domain; the sequence is PVTQIQSTRG…SMLMSPFVPS (144 aa). Cystine bridges form between C532–C559 and C547–C561. Positions 532 to 577 are GPS; it reads CVFWDFSQLQWSNAGCQLVNETLDTVLCRCSHLTSFSMLMSPFVPS. The segment at 566-574 is stachel; it reads SFSMLMSPF. Residues 589–609 form a helical membrane-spanning segment; the sequence is IGLSISIASLILCLIIESLFW. At 610–622 the chain is on the cytoplasmic side; that stretch reads KQTKRSQTSYTRN. Residues 623 to 643 traverse the membrane as a helical segment; sequence ICLVNIAVSLLIADVWFIIAA. Over 644–658 the chain is Extracellular; sequence TVDPSVSPSGVCVAA. A disulfide bridge connects residues C655 and C731. Residues 659–679 form a helical membrane-spanning segment; the sequence is VFFTHFFYLAVFFWMLVLGIL. The Cytoplasmic segment spans residues 680–697; the sequence is LAYRIILVFHHMALTTMM. Residues 698 to 718 traverse the membrane as a helical segment; the sequence is AIGFCLGYGCPLLISIITLAV. The Extracellular portion of the chain corresponds to 719-742; sequence TQPSNSYKRNDVCWLNWSDKSKPL. N734 carries N-linked (GlcNAc...) asparagine glycosylation. A helical transmembrane segment spans residues 743-763; it reads LAFVVPALTIVAVNLVVVLLV. At 764-789 the chain is on the cytoplasmic side; that stretch reads LRKLWRPAVGERLNQDDKATAIRMGK. The chain crosses the membrane as a helical span at residues 790–810; that stretch reads SLLVLTPLLGLTWGFGIGTMA. Over 811–818 the chain is Extracellular; that stretch reads NSHNLAWH. Residues 819 to 839 form a helical membrane-spanning segment; sequence VLFALLNAFQGFFIFCFGILL. Over 840–908 the chain is Cytoplasmic; it reads DTKLRQLLSN…ITLTQFLSTE (69 aa).

Belongs to the G-protein coupled receptor 2 family. Adhesion G-protein coupled receptor (ADGR) subfamily. Heterodimer of 2 chains generated by proteolytic processing; the large extracellular N-terminal fragment and the membrane-bound C-terminal fragment predominantly remain associated and non-covalently linked. Post-translationally, autoproteolytically processed at the GPS region of the GAIN-B domain; this cleavage modulates receptor activity. As to expression, expressed in liver, kidney and adrenal gland. In kidney strong expression in the renal pelvis and the ureter.

The protein resides in the cell membrane. Forms a heterodimer of 2 chains generated by proteolytic processing that remain associated through non-covalent interactions mediated by the GAIN-B domain. In the inactivated receptor, the Stachel sequence (also named stalk) is embedded in the GAIN-B domain, where it adopts a beta-strand conformation. On activation, the Stachel moves into the 7 transmembrane region and adopts a twisted hook-shaped configuration that forms contacts within the receptor, leading to coupling of a G-alpha protein, which activates signaling. The cleaved GAIN-B and N-terminal domains can then dissociate from the rest of the receptor. Adhesion G-protein coupled receptor (aGPCR) for N-docosahexaenoylethanolamine (synaptamide), an omega-3 fatty acid lipid highly enriched in the brain. Ligand binding causes a conformation change that triggers signaling via guanine nucleotide-binding proteins (G proteins) and modulates the activity of downstream effectors, such as adenylate cyclase. ADGRF1 is coupled to G(s) G proteins and mediates activation of adenylate cyclase activity. Also able to couple to G(q), G(i) and G(12)/G(13) G proteins; additional evidence is however required to confirm this result in vivo. Involved in the development of neurons and cognitive function. In liver, involved in fat accumulation. This chain is Adhesion G-protein coupled receptor F1, found in Mus musculus (Mouse).